Reading from the N-terminus, the 806-residue chain is Lon protease (806 aa).

One can recognise a Lon N-terminal domain in the interval 14 to 207 (YPVLPLRDIV…KALGFMEGEI (194 aa)). 359–366 (GPPGVGKT) is a binding site for ATP. A Lon proteolytic domain is found at 594–775 (DDQVGVVTGL…GEVIAHALLR (182 aa)). Catalysis depends on residues S681 and K724. The interval 786-806 (SQPAALPSVDSQDEAGTSIAH) is disordered.

The protein belongs to the peptidase S16 family. As to quaternary structure, homohexamer. Organized in a ring with a central cavity.

The protein resides in the cytoplasm. The catalysed reaction is Hydrolysis of proteins in presence of ATP.. ATP-dependent serine protease that mediates the selective degradation of mutant and abnormal proteins as well as certain short-lived regulatory proteins. Required for cellular homeostasis and for survival from DNA damage and developmental changes induced by stress. Degrades polypeptides processively to yield small peptide fragments that are 5 to 10 amino acids long. Binds to DNA in a double-stranded, site-specific manner. In R.meliloti it is important for controlling the turnover of a constitutively expressed protein(s) that, when unregulated, disrupts normal nodule formation and normal growth. The chain is Lon protease from Rhizobium meliloti (strain 1021) (Ensifer meliloti).